A 370-amino-acid chain; its full sequence is tRNA-specific 2-thiouridylase MnmA (370 aa).

ATP is bound by residues 20–27 (GMSGGVDS) and methionine 46. The tract at residues 106–108 (NPD) is interaction with target base in tRNA. Cysteine 111 functions as the Nucleophile in the catalytic mechanism. Cysteines 111 and 207 form a disulfide. Glycine 135 contributes to the ATP binding site. The interaction with tRNA stretch occupies residues 157–159 (KDQ). Cysteine 207 (cysteine persulfide intermediate) is an active-site residue. Residues 318-319 (RY) form an interaction with tRNA region.

It belongs to the MnmA/TRMU family.

The protein resides in the cytoplasm. The catalysed reaction is S-sulfanyl-L-cysteinyl-[protein] + uridine(34) in tRNA + AH2 + ATP = 2-thiouridine(34) in tRNA + L-cysteinyl-[protein] + A + AMP + diphosphate + H(+). Catalyzes the 2-thiolation of uridine at the wobble position (U34) of tRNA, leading to the formation of s(2)U34. The chain is tRNA-specific 2-thiouridylase MnmA from Polynucleobacter asymbioticus (strain DSM 18221 / CIP 109841 / QLW-P1DMWA-1) (Polynucleobacter necessarius subsp. asymbioticus).